A 31-amino-acid chain; its full sequence is Potassium channel toxin alpha-KTx 5.5 (31 aa).

Cystine bridges form between Cys-3-Cys-21, Cys-8-Cys-26, and Cys-12-Cys-28. The tract at residues 6-9 (RRCE) is [R/K]XCQ motif. His-31 bears the Histidine amide mark.

Expressed by the venom gland.

It localises to the secreted. Blocks small conductance calcium-activated potassium channels. The protein is Potassium channel toxin alpha-KTx 5.5 of Hottentotta tamulus (Eastern Indian scorpion).